A 728-amino-acid chain; its full sequence is 1,4-alpha-glucan branching enzyme GlgB (728 aa).

D405 (nucleophile) is an active-site residue. E458 functions as the Proton donor in the catalytic mechanism.

Belongs to the glycosyl hydrolase 13 family. GlgB subfamily. In terms of assembly, monomer.

It carries out the reaction Transfers a segment of a (1-&gt;4)-alpha-D-glucan chain to a primary hydroxy group in a similar glucan chain.. It participates in glycan biosynthesis; glycogen biosynthesis. Functionally, catalyzes the formation of the alpha-1,6-glucosidic linkages in glycogen by scission of a 1,4-alpha-linked oligosaccharide from growing alpha-1,4-glucan chains and the subsequent attachment of the oligosaccharide to the alpha-1,6 position. In Escherichia coli O6:H1 (strain CFT073 / ATCC 700928 / UPEC), this protein is 1,4-alpha-glucan branching enzyme GlgB.